Reading from the N-terminus, the 318-residue chain is AT-hook motif nuclear-localized protein 7 (318 aa).

2 disordered regions span residues 1 to 76 (METS…PSSS) and 241 to 318 (SDQQ…LPVD). A Bipartite nuclear localization signal motif is present at residues 56 to 64 (KKRRGRPRK). Positions 56-68 (KKRRGRPRKYEAN) form a DNA-binding region, a.T hook. Residues 120–259 (GSNFTPHVIT…RKQRVEHAPA (140 aa)) form the PPC domain. A compositionally biased stretch (basic and acidic residues) spans 243 to 256 (QQDHQKPRKQRVEH). The segment covering 264 to 274 (VPPPPSPPPPA) has biased composition (pro residues). Over residues 288–312 (PPSSFGISSWTNGQDMPRNSATDIN) the composition is skewed to polar residues.

The protein resides in the nucleus. Transcription factor that specifically binds AT-rich DNA sequences related to the nuclear matrix attachment regions (MARs). The sequence is that of AT-hook motif nuclear-localized protein 7 from Arabidopsis thaliana (Mouse-ear cress).